Consider the following 64-residue polypeptide: Large ribosomal subunit protein uL30 (64 aa).

The segment at 1-22 (MAKAAKTIKVEQTGSAIRRHHS) is disordered.

Belongs to the universal ribosomal protein uL30 family. As to quaternary structure, part of the 50S ribosomal subunit.

This is Large ribosomal subunit protein uL30 from Nitrobacter winogradskyi (strain ATCC 25391 / DSM 10237 / CIP 104748 / NCIMB 11846 / Nb-255).